Consider the following 222-residue polypeptide: Germin-like protein 11-1 (222 aa).

The signal sequence occupies residues 1–23 (MKLSTVLCCYLLLLGLFAPEIIS). A disulfide bridge connects residues Cys-32 and Cys-49. One can recognise a Cupin type-1 domain in the interval 72 to 195 (DNMVRSSANI…AMFAPDSEVA (124 aa)). Mn(2+)-binding residues include His-111, His-113, Glu-118, and His-157.

Belongs to the germin family. As to quaternary structure, oligomer (believed to be a pentamer but probably hexamer).

It localises to the secreted. The protein localises to the extracellular space. Its subcellular location is the apoplast. Functionally, may play a role in plant defense. Probably has no oxalate oxidase activity even if the active site is conserved. This is Germin-like protein 11-1 from Oryza sativa subsp. japonica (Rice).